The chain runs to 627 residues: Asparagine synthetase domain-containing protein 1 (627 aa).

The For GATase activity role is filled by C2. One can recognise a Glutamine amidotransferase type-2 domain in the interval 2–184; it reads CGICCSVSFS…ASGIFQIDLN (183 aa). Residues 308-597 form the Asparagine synthetase domain; it reads ASKEVLKTCS…GLPASALLPK (290 aa). A disordered region spans residues 373 to 404; sequence QQNHHEIPSEESSQSPAADEGPGEAEVPDRVT.

In Mus musculus (Mouse), this protein is Asparagine synthetase domain-containing protein 1 (Asnsd1).